A 451-amino-acid polypeptide reads, in one-letter code: MMTAPKITFIGAGSTIFVKNILGDVFHREALKSAHVALMDIDETRLEESHIVVRKLMDSAGASGRITCHTNQKAALQDADFVVVAFQIGGYEPCTVTDFEVCKRHGLEQTIADTLGPGGIMRALRTIPHLWRICEDMTEVCPKATMLNYVNPMAMNTWAMYARYPHIKQVGLCHSVQGTAEELARDLNIDPTSLRYRCAGINHMAFYLELERKTADGTYVNLYPELLAAYDAGQAPKPNIHGNERCQNIVRYEMFKKLGYFVTESSEHFAEYTPWFIKPGREDLIARYKVPLDEYPKRCVEQLANWHKELEEYKTAERIDIKPSREYASTIMNALWTGEPSVIYGNVRNEGLIDNLPQGSCVEVACLVDANGIQPTKVGTIPSHLAAMMQTNINVQTLLTEAILTENRDRVYHAAMMDPHTAAVLGIEEIYALVDDLIAAHGDWLPAWLRR.

An NAD(+)-binding site is contributed by 5 to 71 (PKITFIGAGS…ASGRITCHTN (67 aa)). Position 151 (Asn-151) interacts with substrate. Position 173 (Cys-173) interacts with Mn(2+). His-174 (proton donor) is an active-site residue. A Mn(2+)-binding site is contributed by His-203. Arg-287 is a binding site for substrate.

The protein belongs to the glycosyl hydrolase 4 family. As to quaternary structure, homodimer. Requires Mn(2+) as cofactor. NAD(+) is required as a cofactor.

The enzyme catalyses Hydrolysis of terminal, non-reducing alpha-D-galactose residues in alpha-D-galactosides, including galactose oligosaccharides, galactomannans and galactolipids.. The chain is Alpha-galactosidase (melA) from Salmonella typhimurium (strain LT2 / SGSC1412 / ATCC 700720).